The following is a 954-amino-acid chain: Kinesin-like protein KIN-14A (954 aa).

A Calponin-homology (CH) domain is found at 24 to 142 (ALRRHQAATW…CVISLKSYHE (119 aa)). A coiled-coil region spans residues 242-293 (LSRQLEKEQSSNSQVENRRRLLQAQESELLELKSMFQEVKIDFRTLKTQFQD). A Kinesin motor domain is found at 332–651 (NIRVFCRIRP…LKFAQRASCV (320 aa)). An ATP-binding site is contributed by 413 to 420 (GQTGSGKT). Residues 656–692 (AHANKESNEIRELKEQVENLKRALAAKELEKSSFKLK) are a coiled coil. The segment covering 697–709 (VRERAKQVPERTP) has biased composition (basic and acidic residues). Disordered stretches follow at residues 697–743 (VRER…TKLN), 824–858 (NLEV…RKSI), and 882–954 (PAKI…KRWL). Polar residues-rich tracts occupy residues 831 to 849 (DEPS…NATK) and 886 to 898 (ANST…SSIT).

This sequence belongs to the TRAFAC class myosin-kinesin ATPase superfamily. Kinesin family. KIN-14 subfamily.

In Oryza sativa subsp. japonica (Rice), this protein is Kinesin-like protein KIN-14A.